The primary structure comprises 217 residues: UPF0502 protein swp_3027 (217 aa).

This sequence belongs to the UPF0502 family.

The polypeptide is UPF0502 protein swp_3027 (Shewanella piezotolerans (strain WP3 / JCM 13877)).